Reading from the N-terminus, the 392-residue chain is 26S proteasome regulatory subunit 8 homolog (392 aa).

176-183 lines the ATP pocket; that stretch reads GPPGTGKT.

Belongs to the AAA ATPase family. As to quaternary structure, the 26S proteasome consists of a 20S proteasome core and two 19S regulatory subunits. The 20S proteasome core is composed of 28 subunits that are arranged in four stacked rings, resulting in a barrel-shaped structure. The two end rings are each formed by seven alpha subunits, and the two central rings are each formed by seven beta subunits. The catalytic chamber with the active sites is on the inside of the barrel.

It localises to the cytoplasm. The protein localises to the nucleus. In terms of biological role, acts as a regulatory subunit of the 26S proteasome which degrades poly-ubiquitinated proteins in the cytoplasm and in the nucleus. It is essential for the regulated turnover of proteins and for the removal of misfolded proteins. The proteasome is a multicatalytic proteinase complex that is characterized by its ability to cleave peptides with Arg, Phe, Tyr, Leu, and Glu adjacent to the leaving group at neutral or slightly basic pH. This chain is 26S proteasome regulatory subunit 8 homolog (RPT6), found in Encephalitozoon cuniculi (strain GB-M1) (Microsporidian parasite).